Consider the following 278-residue polypeptide: Deoxyribonuclease-1-like 2 (278 aa).

The signal sequence occupies residues 1 to 21 (MGWPWAPLTAVWALGVMGATA). Catalysis depends on residues Glu99 and His150. Cys189 and Cys225 are joined by a disulfide.

Belongs to the DNase I family. Mg(2+) is required as a cofactor. It depends on Ca(2+) as a cofactor.

It is found in the cytoplasm. It localises to the secreted. Divalent cation-dependent acid DNA endonuclease involved in the breakdown of the nucleus during corneocyte formation of epidermal keratinocytes. May play an immune role by eliminating harmful DNA released into the extracellular environment by damaged epidermal cells. In Mus musculus (Mouse), this protein is Deoxyribonuclease-1-like 2 (Dnase1l2).